Reading from the N-terminus, the 624-residue chain is Chaperone protein HtpG (624 aa).

The a; substrate-binding stretch occupies residues 1 to 336; it reads MKGQETRGFQ…SNDLPLNVSR (336 aa). The b stretch occupies residues 337-552; that stretch reads EILQDSTVTR…ADEMSTQMAK (216 aa). The tract at residues 553–624 is c; the sequence is LFAAAGQSVP…IRRMNQLLVS (72 aa).

It belongs to the heat shock protein 90 family. As to quaternary structure, homodimer.

It localises to the cytoplasm. Molecular chaperone. Has ATPase activity. The sequence is that of Chaperone protein HtpG from Salmonella paratyphi B (strain ATCC BAA-1250 / SPB7).